The chain runs to 379 residues: Queuine tRNA-ribosyltransferase (379 aa).

Catalysis depends on Asp-94, which acts as the Proton acceptor. Residues 94–98 (DSGGF), Asp-148, Gln-191, and Gly-218 each bind substrate. The RNA binding stretch occupies residues 249-255 (GVGSPDS). The active-site Nucleophile is Asp-268. The RNA binding; important for wobble base 34 recognition stretch occupies residues 273–277 (TRIAR). Positions 306, 308, 311, and 337 each coordinate Zn(2+).

It belongs to the queuine tRNA-ribosyltransferase family. As to quaternary structure, homodimer. Within each dimer, one monomer is responsible for RNA recognition and catalysis, while the other monomer binds to the replacement base PreQ1. Zn(2+) is required as a cofactor.

The catalysed reaction is 7-aminomethyl-7-carbaguanine + guanosine(34) in tRNA = 7-aminomethyl-7-carbaguanosine(34) in tRNA + guanine. The protein operates within tRNA modification; tRNA-queuosine biosynthesis. Functionally, catalyzes the base-exchange of a guanine (G) residue with the queuine precursor 7-aminomethyl-7-deazaguanine (PreQ1) at position 34 (anticodon wobble position) in tRNAs with GU(N) anticodons (tRNA-Asp, -Asn, -His and -Tyr). Catalysis occurs through a double-displacement mechanism. The nucleophile active site attacks the C1' of nucleotide 34 to detach the guanine base from the RNA, forming a covalent enzyme-RNA intermediate. The proton acceptor active site deprotonates the incoming PreQ1, allowing a nucleophilic attack on the C1' of the ribose to form the product. After dissociation, two additional enzymatic reactions on the tRNA convert PreQ1 to queuine (Q), resulting in the hypermodified nucleoside queuosine (7-(((4,5-cis-dihydroxy-2-cyclopenten-1-yl)amino)methyl)-7-deazaguanosine). The polypeptide is Queuine tRNA-ribosyltransferase (Bacillus anthracis (strain CDC 684 / NRRL 3495)).